The sequence spans 415 residues: Lipoyl synthase, mitochondrial (415 aa).

Residues 1–33 (MAASTSHLRSLCSSTRSLSRSGVIVTPIACRGY) constitute a mitochondrion transit peptide. [4Fe-4S] cluster-binding residues include C132, C137, C143, C163, C167, C170, and S378. Residues 148–367 (DKSSATATIM…RQRALEMGFL (220 aa)) form the Radical SAM core domain.

It belongs to the radical SAM superfamily. Lipoyl synthase family. It depends on [4Fe-4S] cluster as a cofactor.

The protein resides in the mitochondrion. It carries out the reaction [[Fe-S] cluster scaffold protein carrying a second [4Fe-4S](2+) cluster] + N(6)-octanoyl-L-lysyl-[protein] + 2 oxidized [2Fe-2S]-[ferredoxin] + 2 S-adenosyl-L-methionine + 4 H(+) = [[Fe-S] cluster scaffold protein] + N(6)-[(R)-dihydrolipoyl]-L-lysyl-[protein] + 4 Fe(3+) + 2 hydrogen sulfide + 2 5'-deoxyadenosine + 2 L-methionine + 2 reduced [2Fe-2S]-[ferredoxin]. It participates in protein modification; protein lipoylation via endogenous pathway; protein N(6)-(lipoyl)lysine from octanoyl-[acyl-carrier-protein]: step 2/2. Catalyzes the radical-mediated insertion of two sulfur atoms into the C-6 and C-8 positions of the octanoyl moiety bound to the lipoyl domains of lipoate-dependent enzymes, thereby converting the octanoylated domains into lipoylated derivatives. The chain is Lipoyl synthase, mitochondrial from Aspergillus clavatus (strain ATCC 1007 / CBS 513.65 / DSM 816 / NCTC 3887 / NRRL 1 / QM 1276 / 107).